The following is an 874-amino-acid chain: Alanine--tRNA ligase (874 aa).

The Zn(2+) site is built by H563, H567, C665, and H669.

It belongs to the class-II aminoacyl-tRNA synthetase family. It depends on Zn(2+) as a cofactor.

It localises to the cytoplasm. It carries out the reaction tRNA(Ala) + L-alanine + ATP = L-alanyl-tRNA(Ala) + AMP + diphosphate. Functionally, catalyzes the attachment of alanine to tRNA(Ala) in a two-step reaction: alanine is first activated by ATP to form Ala-AMP and then transferred to the acceptor end of tRNA(Ala). Also edits incorrectly charged Ser-tRNA(Ala) and Gly-tRNA(Ala) via its editing domain. The protein is Alanine--tRNA ligase of Aeromonas salmonicida (strain A449).